The chain runs to 309 residues: Diacylglycerol kinase (309 aa).

Residues 9 to 140 (HEIGKVTALT…IDLGRIQDDN (132 aa)) form the DAGKc domain. ATP contacts are provided by residues 19–23 (NPLSG), 76–82 (GDGVVSN), and T101. Positions 226, 229, and 231 each coordinate Mg(2+). The active-site Proton acceptor is D285.

It belongs to the diacylglycerol/lipid kinase family. It depends on Mg(2+) as a cofactor.

It localises to the secreted. Its subcellular location is the cell wall. The enzyme catalyses a 1,2-diacyl-sn-glycerol + ATP = a 1,2-diacyl-sn-glycero-3-phosphate + ADP + H(+). It carries out the reaction N-hexadecanoylsphing-4-enine + ATP = N-(hexadecanoyl)-sphing-4-enine-1-phosphate + ADP + H(+). Catalyzes the phosphorylation of diacylglycerol (DAG) into phosphatidic acid. Is involved in the biosynthesis of phosphatidylinositol mannosides (PIMs), probably via a role in the biosynthesis of phosphatidylinositol (PI), a PIM precursor, which is derived from phosphatidic acid. Is also able to phosphorylate other various amphipathic lipids of host and bacterial origin in vitro, such as ceramide. This is Diacylglycerol kinase (dagK) from Mycobacterium tuberculosis (strain CDC 1551 / Oshkosh).